The primary structure comprises 107 residues: Basic phospholipase A2 sphenotoxin subunit B (107 aa).

Positions 27, 29, and 31 each coordinate Ca(2+). Intrachain disulfides connect Cys-28-Cys-44, Cys-43-Cys-91, Cys-50-Cys-88, Cys-57-Cys-81, and Cys-75-Cys-86. The active site involves His-47. Asp-48 is a Ca(2+) binding site. Asp-89 is a catalytic residue.

This sequence belongs to the phospholipase A2 family. Group II subfamily. D49 sub-subfamily. As to quaternary structure, heterodimer of A and B chains; non-covalently linked. The acidic protein (B chain) has phospholipase A2 activity and the A chain weakly inhibits the B chain enzymatic activity but potentiates its lethal potency. In terms of tissue distribution, expressed by the venom gland.

The protein localises to the secreted. It catalyses the reaction a 1,2-diacyl-sn-glycero-3-phosphocholine + H2O = a 1-acyl-sn-glycero-3-phosphocholine + a fatty acid + H(+). Functionally, heterodimer A-B: Sphenotoxin is a potent neurotoxin that possesses phospholipase A2 (PLA2) activity. It consists of a non-covalent association of a basic PLA2 subunit B with a non-enzymatic subunit A. Its function is as follows. Monomer B: Not found in vivo. In vitro, potent neurotoxin that possesses phospholipase A2 (PLA2) activity and exerts a lethal action by blocking neuromuscular transmission. Induces paralysis of the hind legs and neuromuscular blockade in mouse phrenic nerve-diaphragm preparations. PLA2 catalyzes the calcium-dependent hydrolysis of the 2-acyl groups in 3-sn-phosphoglycerides. This Ophryacus sphenophrys (Broad-horned pitviper) protein is Basic phospholipase A2 sphenotoxin subunit B.